Consider the following 207-residue polypeptide: Alpha-1-acid glycoprotein 1 (207 aa).

Residues 1 to 18 (MALHMILVMLSLLPLLEA) form the signal peptide. Pyrrolidone carboxylic acid is present on Gln19. Residues Asn25, Asn34, Asn76, Asn94, and Asn104 are each glycosylated (N-linked (GlcNAc...) asparagine). A disulfide bond links Cys91 and Cys184.

This sequence belongs to the calycin superfamily. Lipocalin family. In terms of tissue distribution, expressed by the liver and secreted in plasma.

The protein resides in the secreted. In terms of biological role, functions as a transport protein in the blood stream. Binds various ligands in the interior of its beta-barrel domain. Appears to function in modulating the activity of the immune system during the acute-phase reaction. In Mus caroli (Ryukyu mouse), this protein is Alpha-1-acid glycoprotein 1 (Orm1).